We begin with the raw amino-acid sequence, 365 residues long: MREVGCPEEDLFSFLSSKRREDLGYRNILSSMCTPPHPVAARAHAMFLETNLGDPGLFPGTAALEDLLVRRLGTLMHLPDAGGYATSGGTESNIQAFRIAKKLKSAKSPNVVVPASSHFSFTKACDILGLEMRTVPLDAGFRMETEAVDGLIDHNTVALVGVVGTTEYGMVDPISRLSEIALDRNVFLHVDAAFGGMVVPFLDRPVPFDFSLPGVSSISVDPHKMGMSTIPAGCLLTRSAEWFSCLNVDTPYLTVKRECTLAGTRPGASVAAAIAVLEYLGMDGMRAVVAGCMENCRRLIEGMETLGYPRAVTPDVNVATFSCERAPVGWRVSTTRNGHMRIVCMPHVTRDVVEQFLVDMGDTDA.

Residue lysine 224 is modified to N6-(pyridoxal phosphate)lysine.

The protein belongs to the group II decarboxylase family. MfnA subfamily. Pyridoxal 5'-phosphate is required as a cofactor.

It carries out the reaction L-tyrosine + H(+) = tyramine + CO2. It catalyses the reaction L-aspartate + H(+) = beta-alanine + CO2. The protein operates within cofactor biosynthesis; methanofuran biosynthesis. It participates in cofactor biosynthesis; coenzyme A biosynthesis. Functionally, catalyzes the decarboxylation of L-tyrosine to produce tyramine for methanofuran biosynthesis. Can also catalyze the decarboxylation of L-aspartate to produce beta-alanine for coenzyme A (CoA) biosynthesis. The sequence is that of Probable L-tyrosine/L-aspartate decarboxylase from Methanoculleus marisnigri (strain ATCC 35101 / DSM 1498 / JR1).